A 236-amino-acid chain; its full sequence is MTRRYWNINLEEMLEAGVHFGHGTRKWNPRMAPFISAKRKGIHITNLTRTARFLSEACDLVFDAASKGKHFLIVGTKNKAADLVASAAIKARCHFVNKKWLGGMLTNWSTTETRLQKFRDLRAEQRMGKLNSLPKRDAAMLKRQLSTLQTYLGGIKYMTGLPDIVIIVDQQEEYTALRECVILGIPTICLIDTNCDPDIADISIPANDDAIASIRLILNKLVSAIIDGRSSYIRNH.

The protein belongs to the universal ribosomal protein uS2 family.

Its subcellular location is the plastid. It is found in the chloroplast. The sequence is that of Small ribosomal subunit protein uS2c (rps2) from Lemna minor (Common duckweed).